The sequence spans 212 residues: Peptide methionine sulfoxide reductase MsrA (212 aa).

The active site involves cysteine 52.

This sequence belongs to the MsrA Met sulfoxide reductase family.

The enzyme catalyses L-methionyl-[protein] + [thioredoxin]-disulfide + H2O = L-methionyl-(S)-S-oxide-[protein] + [thioredoxin]-dithiol. The catalysed reaction is [thioredoxin]-disulfide + L-methionine + H2O = L-methionine (S)-S-oxide + [thioredoxin]-dithiol. Has an important function as a repair enzyme for proteins that have been inactivated by oxidation. Catalyzes the reversible oxidation-reduction of methionine sulfoxide in proteins to methionine. The protein is Peptide methionine sulfoxide reductase MsrA of Salmonella paratyphi B (strain ATCC BAA-1250 / SPB7).